A 270-amino-acid chain; its full sequence is Formamidopyrimidine-DNA glycosylase (270 aa).

Catalysis depends on P2, which acts as the Schiff-base intermediate with DNA. The active-site Proton donor is E3. K58 acts as the Proton donor; for beta-elimination activity in catalysis. DNA-binding residues include H91, R110, and R151. Residues 236–270 (FVYGRGGQPCKVCGTELREVKLGQRASVFCPKCQR) form an FPG-type zinc finger. The Proton donor; for delta-elimination activity role is filled by R260.

The protein belongs to the FPG family. As to quaternary structure, monomer. Requires Zn(2+) as cofactor.

It catalyses the reaction Hydrolysis of DNA containing ring-opened 7-methylguanine residues, releasing 2,6-diamino-4-hydroxy-5-(N-methyl)formamidopyrimidine.. The catalysed reaction is 2'-deoxyribonucleotide-(2'-deoxyribose 5'-phosphate)-2'-deoxyribonucleotide-DNA = a 3'-end 2'-deoxyribonucleotide-(2,3-dehydro-2,3-deoxyribose 5'-phosphate)-DNA + a 5'-end 5'-phospho-2'-deoxyribonucleoside-DNA + H(+). Involved in base excision repair of DNA damaged by oxidation or by mutagenic agents. Acts as a DNA glycosylase that recognizes and removes damaged bases. Has a preference for oxidized purines, such as 7,8-dihydro-8-oxoguanine (8-oxoG). Has AP (apurinic/apyrimidinic) lyase activity and introduces nicks in the DNA strand. Cleaves the DNA backbone by beta-delta elimination to generate a single-strand break at the site of the removed base with both 3'- and 5'-phosphates. The polypeptide is Formamidopyrimidine-DNA glycosylase (Pseudomonas entomophila (strain L48)).